We begin with the raw amino-acid sequence, 588 residues long: A-type ATP synthase subunit A 3 (588 aa).

234–241 (GPFGSGKT) serves as a coordination point for ATP.

This sequence belongs to the ATPase alpha/beta chains family. In terms of assembly, has multiple subunits with at least A(3), B(3), C, D, E, F, H, I and proteolipid K(x).

The protein localises to the cell membrane. It carries out the reaction ATP + H2O + 4 H(+)(in) = ADP + phosphate + 5 H(+)(out). In terms of biological role, component of the A-type ATP synthase that produces ATP from ADP in the presence of a proton gradient across the membrane. The A chain is the catalytic subunit. This Methanospirillum hungatei JF-1 (strain ATCC 27890 / DSM 864 / NBRC 100397 / JF-1) protein is A-type ATP synthase subunit A 3.